The following is an 868-amino-acid chain: Rifampicin phosphotransferase (868 aa).

Residues 5–317 (TERYVLDLQE…FHIVQSRPIT (313 aa)) are ATP-binding. ATP contacts are provided by lysine 26, arginine 120, glycine 135, threonine 139, glutamine 186, glutamate 300, glutamine 312, and arginine 314. The tract at residues 330-755 (NHVYVSVGHQ…TSDGEALTGA (426 aa)) is rifampicin-binding. Residues 410–430 (FVPSLPDAPPAGPRAGAAPEP) are disordered. A swivel phosphohistidine region spans residues 768 to 866 (GLPVSTGTVE…VHGTDGYIEI (99 aa)). The active-site Tele-phosphohistidine intermediate is histidine 826.

This sequence belongs to the rifampicin phosphotransferase family.

It catalyses the reaction rifampicin + ATP + H2O = 21-phosphorifampicin + AMP + phosphate + 2 H(+). Functionally, catalyzes the phosphorylation of rifampicin, also known as rifampin (RIF), leading to its inactivation. Confers high level resistance to a variety of clinically used rifamycin antibiotics. Does not show phosphoenolpyruvate (PEP) synthase activity. This Streptomyces sviceus (strain ATCC 29083 / DSM 924 / JCM 4929 / NBRC 13980 / NCIMB 11184 / NRRL 5439 / UC 5370) protein is Rifampicin phosphotransferase.